Here is a 233-residue protein sequence, read N- to C-terminus: Thymidylate kinase (233 aa).

10–17 (GVDGVGKT) is a binding site for ATP.

Belongs to the thymidylate kinase family.

It carries out the reaction dTMP + ATP = dTDP + ADP. Its function is as follows. Phosphorylation of dTMP to form dTDP in both de novo and salvage pathways of dTTP synthesis. This chain is Thymidylate kinase, found in Bifidobacterium longum subsp. infantis (strain ATCC 15697 / DSM 20088 / JCM 1222 / NCTC 11817 / S12).